The sequence spans 38 residues: Large ribosomal subunit protein bL36 (38 aa).

It belongs to the bacterial ribosomal protein bL36 family.

The protein is Large ribosomal subunit protein bL36 of Psychrobacter arcticus (strain DSM 17307 / VKM B-2377 / 273-4).